The following is a 74-amino-acid chain: Putative defensin-like protein 12 (74 aa).

Positions Met1–Cys26 are cleaved as a signal peptide. Intrachain disulfides connect Cys26–Cys50, Cys33–Cys59, and Cys39–Cys61.

It belongs to the DEFL family.

It is found in the secreted. This chain is Putative defensin-like protein 12, found in Arabidopsis thaliana (Mouse-ear cress).